The primary structure comprises 416 residues: Peroxisomal isocitrate dehydrogenase [NADP] (416 aa).

NADP(+)-binding positions include 77-79 (TIT) and arginine 84. Threonine 79 lines the substrate pocket. Substrate contacts are provided by residues 96–102 (SPNGTIR), arginine 111, and arginine 134. Mn(2+) is bound at residue aspartate 253. Lysine 261 provides a ligand contact to NADP(+). Aspartate 276 serves as a coordination point for Mn(2+). NADP(+) is bound by residues 311-316 (GTVTRH) and asparagine 329. Positions 414-416 (SRL) match the Peroxisomal targeting signal motif.

It belongs to the isocitrate and isopropylmalate dehydrogenases family. The cofactor is Mg(2+). Requires Mn(2+) as cofactor.

Its subcellular location is the peroxisome. The catalysed reaction is D-threo-isocitrate + NADP(+) = 2-oxoglutarate + CO2 + NADPH. In terms of biological role, may be involved in response to oxidative stresses. This is Peroxisomal isocitrate dehydrogenase [NADP] (ICDH) from Arabidopsis thaliana (Mouse-ear cress).